The primary structure comprises 336 residues: tRNA N6-adenosine threonylcarbamoyltransferase (336 aa).

2 residues coordinate Fe cation: His114 and His118. Residues Leu136 to Gly140, Asp169, Gly182, Asp186, and Asn275 each bind substrate. Asp301 contacts Fe cation.

It belongs to the KAE1 / TsaD family. It depends on Fe(2+) as a cofactor.

It is found in the cytoplasm. The enzyme catalyses L-threonylcarbamoyladenylate + adenosine(37) in tRNA = N(6)-L-threonylcarbamoyladenosine(37) in tRNA + AMP + H(+). Required for the formation of a threonylcarbamoyl group on adenosine at position 37 (t(6)A37) in tRNAs that read codons beginning with adenine. Is involved in the transfer of the threonylcarbamoyl moiety of threonylcarbamoyl-AMP (TC-AMP) to the N6 group of A37, together with TsaE and TsaB. TsaD likely plays a direct catalytic role in this reaction. The protein is tRNA N6-adenosine threonylcarbamoyltransferase of Streptococcus pneumoniae (strain P1031).